The chain runs to 75 residues: Bacteriocin lactacin-F subunit LafA (75 aa).

Positions 1 to 18 (MKQFNYLSHKDLAVVVGG) are excised as a propeptide.

Belongs to the bacteriocin class IIB family. As to quaternary structure, this bacteriocin depends upon the complementation of two peptides for activity: LafA and LafX. Associated with a 180 kDa bacteriocin complex.

Heat stable bacteriocin active against Enterococcus faecalis and other Lactobacilli. The protein is Bacteriocin lactacin-F subunit LafA (lafA) of Lactobacillus johnsonii (strain CNCM I-12250 / La1 / NCC 533).